Consider the following 195-residue polypeptide: NADH-quinone oxidoreductase subunit B (195 aa).

The [4Fe-4S] cluster site is built by Cys74, Cys75, Cys139, and Cys169.

This sequence belongs to the complex I 20 kDa subunit family. In terms of assembly, NDH-1 is composed of 14 different subunits. Subunits NuoB, C, D, E, F, and G constitute the peripheral sector of the complex. [4Fe-4S] cluster serves as cofactor.

Its subcellular location is the cell inner membrane. The catalysed reaction is a quinone + NADH + 5 H(+)(in) = a quinol + NAD(+) + 4 H(+)(out). NDH-1 shuttles electrons from NADH, via FMN and iron-sulfur (Fe-S) centers, to quinones in the respiratory chain. The immediate electron acceptor for the enzyme in this species is believed to be ubiquinone. Couples the redox reaction to proton translocation (for every two electrons transferred, four hydrogen ions are translocated across the cytoplasmic membrane), and thus conserves the redox energy in a proton gradient. The sequence is that of NADH-quinone oxidoreductase subunit B from Methylorubrum extorquens (strain PA1) (Methylobacterium extorquens).